The chain runs to 201 residues: ATP-dependent Clp protease proteolytic subunit 2 (201 aa).

The Nucleophile role is filled by serine 98. The active site involves histidine 123.

This sequence belongs to the peptidase S14 family. As to quaternary structure, fourteen ClpP subunits assemble into 2 heptameric rings which stack back to back to give a disk-like structure with a central cavity, resembling the structure of eukaryotic proteasomes.

The protein localises to the cytoplasm. The enzyme catalyses Hydrolysis of proteins to small peptides in the presence of ATP and magnesium. alpha-casein is the usual test substrate. In the absence of ATP, only oligopeptides shorter than five residues are hydrolyzed (such as succinyl-Leu-Tyr-|-NHMec, and Leu-Tyr-Leu-|-Tyr-Trp, in which cleavage of the -Tyr-|-Leu- and -Tyr-|-Trp bonds also occurs).. Functionally, cleaves peptides in various proteins in a process that requires ATP hydrolysis. Has a chymotrypsin-like activity. Plays a major role in the degradation of misfolded proteins. The polypeptide is ATP-dependent Clp protease proteolytic subunit 2 (Pseudomonas aeruginosa (strain ATCC 15692 / DSM 22644 / CIP 104116 / JCM 14847 / LMG 12228 / 1C / PRS 101 / PAO1)).